The sequence spans 209 residues: Thiamine-phosphate synthase (209 aa).

4-amino-2-methyl-5-(diphosphooxymethyl)pyrimidine contacts are provided by residues 37 to 41 (QYRDK) and N69. Positions 70 and 89 each coordinate Mg(2+). 4-amino-2-methyl-5-(diphosphooxymethyl)pyrimidine is bound at residue S108. 135–137 (SPT) is a 2-[(2R,5Z)-2-carboxy-4-methylthiazol-5(2H)-ylidene]ethyl phosphate binding site. Residue K138 coordinates 4-amino-2-methyl-5-(diphosphooxymethyl)pyrimidine. Residues G165 and 185 to 186 (VS) each bind 2-[(2R,5Z)-2-carboxy-4-methylthiazol-5(2H)-ylidene]ethyl phosphate.

This sequence belongs to the thiamine-phosphate synthase family. The cofactor is Mg(2+).

The catalysed reaction is 2-[(2R,5Z)-2-carboxy-4-methylthiazol-5(2H)-ylidene]ethyl phosphate + 4-amino-2-methyl-5-(diphosphooxymethyl)pyrimidine + 2 H(+) = thiamine phosphate + CO2 + diphosphate. The enzyme catalyses 2-(2-carboxy-4-methylthiazol-5-yl)ethyl phosphate + 4-amino-2-methyl-5-(diphosphooxymethyl)pyrimidine + 2 H(+) = thiamine phosphate + CO2 + diphosphate. It carries out the reaction 4-methyl-5-(2-phosphooxyethyl)-thiazole + 4-amino-2-methyl-5-(diphosphooxymethyl)pyrimidine + H(+) = thiamine phosphate + diphosphate. Its pathway is cofactor biosynthesis; thiamine diphosphate biosynthesis; thiamine phosphate from 4-amino-2-methyl-5-diphosphomethylpyrimidine and 4-methyl-5-(2-phosphoethyl)-thiazole: step 1/1. In terms of biological role, condenses 4-methyl-5-(beta-hydroxyethyl)thiazole monophosphate (THZ-P) and 2-methyl-4-amino-5-hydroxymethyl pyrimidine pyrophosphate (HMP-PP) to form thiamine monophosphate (TMP). The polypeptide is Thiamine-phosphate synthase (Halorhodospira halophila (strain DSM 244 / SL1) (Ectothiorhodospira halophila (strain DSM 244 / SL1))).